A 459-amino-acid chain; its full sequence is cAMP-dependent protein kinase regulatory subunit (459 aa).

The dimerization and phosphorylation stretch occupies residues 30 to 219 (QFCANYFNTK…TLANNLKNNF (190 aa)). 2 disordered regions span residues 78–109 (VNDRQPSFKSPFGVNDPHSNHDEDPHAKDTKT) and 125–168 (FDVK…PSSK). Residues 95–109 (HSNHDEDPHAKDTKT) are compositionally biased toward basic and acidic residues. Residues 146–168 (KPSSSSQPNQQSASASSKTPSSK) show a composition bias toward low complexity. S180 is subject to Phosphoserine. 3',5'-cyclic AMP contacts are provided by residues 220–335 (LFKQ…FLKD), E285, R294, 338–454 (VLKS…KSQD), E404, and R413.

It belongs to the cAMP-dependent kinase regulatory chain family. In terms of assembly, tetramer, composed of 2 regulatory (R) and 2 catalytic (C) subunits. In the presence of cAMP it dissociates into 2 active monomeric C subunits and an R dimer.

The sequence is that of cAMP-dependent protein kinase regulatory subunit (BCY1) from Candida albicans (strain SC5314 / ATCC MYA-2876) (Yeast).